The primary structure comprises 513 residues: ATP synthase subunit alpha (513 aa).

An ATP-binding site is contributed by 169-176 (GDRQTGKT).

The protein belongs to the ATPase alpha/beta chains family. F-type ATPases have 2 components, CF(1) - the catalytic core - and CF(0) - the membrane proton channel. CF(1) has five subunits: alpha(3), beta(3), gamma(1), delta(1), epsilon(1). CF(0) has three main subunits: a(1), b(2) and c(9-12). The alpha and beta chains form an alternating ring which encloses part of the gamma chain. CF(1) is attached to CF(0) by a central stalk formed by the gamma and epsilon chains, while a peripheral stalk is formed by the delta and b chains.

It is found in the cell inner membrane. The catalysed reaction is ATP + H2O + 4 H(+)(in) = ADP + phosphate + 5 H(+)(out). Functionally, produces ATP from ADP in the presence of a proton gradient across the membrane. The alpha chain is a regulatory subunit. The polypeptide is ATP synthase subunit alpha (Salmonella arizonae (strain ATCC BAA-731 / CDC346-86 / RSK2980)).